The chain runs to 95 residues: Protein TusB (95 aa).

The protein belongs to the DsrH/TusB family. In terms of assembly, heterohexamer, formed by a dimer of trimers. The hexameric TusBCD complex contains 2 copies each of TusB, TusC and TusD. The TusBCD complex interacts with TusE.

It localises to the cytoplasm. Functionally, part of a sulfur-relay system required for 2-thiolation of 5-methylaminomethyl-2-thiouridine (mnm(5)s(2)U) at tRNA wobble positions. The protein is Protein TusB of Shigella flexneri.